The following is a 346-amino-acid chain: MAQAPDREKALELALAQIDKSFGKGSVMRLGDEVRQPISVIPTGSIALDVALGIGGLPRGRVIEIYGPESSGKTTVALHAVANAQRAGGIAAFIDAEHALDPEYAKKLGVDTDSLLVSQPDTGEQALEIADMLVRSGAIDLIVIDSVAALVPRAEIEGEMGDSHVGLQARLMSQALRKMTGALNNSGTTAIFINQLREKIGVMFGSPETTTGGKALKFYSSVRLDVRRIETLKDGTDAVGNRTRVKVVKNKVSPPFKQAEFDILYGKGISKEGSLIDMGVEQGFIRKSGSWFTYEGEQLGQGKENARNFLLENVDVANEIEKKIKEKLGIGAVLTDDEVVPAPVDF.

67–74 serves as a coordination point for ATP; sequence GPESSGKT.

The protein belongs to the RecA family.

Its subcellular location is the cytoplasm. Can catalyze the hydrolysis of ATP in the presence of single-stranded DNA, the ATP-dependent uptake of single-stranded DNA by duplex DNA, and the ATP-dependent hybridization of homologous single-stranded DNAs. It interacts with LexA causing its activation and leading to its autocatalytic cleavage. The chain is Protein RecA from Mycobacteroides abscessus (strain ATCC 19977 / DSM 44196 / CCUG 20993 / CIP 104536 / JCM 13569 / NCTC 13031 / TMC 1543 / L948) (Mycobacterium abscessus).